A 103-amino-acid polypeptide reads, in one-letter code: Small ribosomal subunit protein uS10 (103 aa).

The protein belongs to the universal ribosomal protein uS10 family. As to quaternary structure, part of the 30S ribosomal subunit.

Functionally, involved in the binding of tRNA to the ribosomes. The sequence is that of Small ribosomal subunit protein uS10 from Actinobacillus pleuropneumoniae serotype 5b (strain L20).